A 298-amino-acid polypeptide reads, in one-letter code: GTPase Era (298 aa).

The 168-residue stretch at 3–170 (KSGFVTIVGR…VELMKKAMPE (168 aa)) folds into the Era-type G domain. Residues 11-18 (GRPNVGKS) are G1. 11–18 (GRPNVGKS) lines the GTP pocket. The tract at residues 37-41 (QTTRN) is G2. The G3 stretch occupies residues 58 to 61 (DTPG). Residues 58 to 62 (DTPGI) and 120 to 123 (NKVD) contribute to the GTP site. Residues 120–123 (NKVD) are G4. Residues 149–151 (ISA) are G5. In terms of domain architecture, KH type-2 spans 201–278 (LRDEVPHGIA…NLKIWVKVRK (78 aa)).

It belongs to the TRAFAC class TrmE-Era-EngA-EngB-Septin-like GTPase superfamily. Era GTPase family. Monomer.

It is found in the cytoplasm. The protein localises to the cell membrane. Functionally, an essential GTPase that binds both GDP and GTP, with rapid nucleotide exchange. Plays a role in 16S rRNA processing and 30S ribosomal subunit biogenesis and possibly also in cell cycle regulation and energy metabolism. The polypeptide is GTPase Era (Clostridium beijerinckii (strain ATCC 51743 / NCIMB 8052) (Clostridium acetobutylicum)).